A 428-amino-acid chain; its full sequence is Endoplasmic reticulum junction formation protein lunapark (428 aa).

A lipid anchor (N-myristoyl glycine) is attached at Gly2. At 2–45 (GGLFSRWRTKLSTVEVLESIDKEIQALEEFREKNQRLQKLRVGR) the chain is on the cytoplasmic side. Residues 16–43 (EVLESIDKEIQALEEFREKNQRLQKLRV) are a coiled coil. A helical membrane pass occupies residues 46–66 (LILYSSVLYLFTCLIVYLWYL). The Lumenal portion of the chain corresponds to 67–77 (PDEFTARLAMT). The helical transmembrane segment at 78 to 98 (LPFFAFPLIIWSIRTVIIFFF) threads the bilayer. The Cytoplasmic segment spans residues 99–428 (SKRTERNNEA…ELNGESLTAE (330 aa)). Residues 102–128 (TERNNEALDDLKSQRKKILEEVMEKET) adopt a coiled-coil conformation. Phosphoserine is present on residues Ser114, Ser153, Ser177, Ser182, and Ser194. Residues 143–248 (SKKAKECEPP…PPGPPLARPI (106 aa)) are disordered. The segment covering 185 to 198 (QGPPPQVPVSPGPP) has biased composition (pro residues). Phosphothreonine is present on residues Thr211 and Thr213. Phosphoserine occurs at positions 217 and 227. The C4-type; plays a role in ER morphology zinc-finger motif lies at 276 to 301 (CQQCFSHNGMALKEEFEYIAFRCAYC). Ser321, Ser353, and Ser384 each carry phosphoserine. Residues 361–428 (NNTEQTDDKI…ELNGESLTAE (68 aa)) are disordered. The span at 386–401 (SEEPEEKQETENEEAS) shows a compositional bias: acidic residues. Residue Ser414 is modified to Phosphoserine.

This sequence belongs to the lunapark family. In terms of assembly, homodimer; homodimerization requires the C4-type zinc finger motif and decreases during mitosis in a phosphorylation-dependent manner. Myristoylated; myristoylation is necessary for the endoplasmic reticulum (ER) three-way ER tubular junction formation, but is not required neither for membrane translocation, membrane topology formation, nor for the specific localization to ER membranes. Post-translationally, phosphorylated. Phosphorylation occurs at Ser-177, Ser-182, Ser-217, Ser-227, Ser-321 and Ser-384 during interphase. Phosphorylation occurs at Ser-114, Ser-153, Ser-194, Thr-211 and Ser-353 during mitosis; these phosphorylations reduce both its homodimerization and the ER three-way tubular junction formation. In terms of processing, subject to proteasomal degradation following phosphorylation during mitosis.

The protein localises to the endoplasmic reticulum membrane. Its function is as follows. Endoplasmic reticulum (ER)-shaping membrane protein that plays a role in determining ER morphology. Involved in the stabilization of nascent three-way ER tubular junctions within the ER network. May also play a role as a curvature-stabilizing protein within three-way ER tubular junction network. May be involved in limb and central nervous system development. The polypeptide is Endoplasmic reticulum junction formation protein lunapark (Pongo abelii (Sumatran orangutan)).